Reading from the N-terminus, the 1379-residue chain is DNA-directed RNA polymerase subunit beta'' (1379 aa).

Residues Cys-220, Cys-293, Cys-300, and Cys-303 each coordinate Zn(2+).

It belongs to the RNA polymerase beta' chain family. RpoC2 subfamily. In plastids the minimal PEP RNA polymerase catalytic core is composed of four subunits: alpha, beta, beta', and beta''. When a (nuclear-encoded) sigma factor is associated with the core the holoenzyme is formed, which can initiate transcription. It depends on Zn(2+) as a cofactor.

It localises to the plastid. The protein localises to the chloroplast. It catalyses the reaction RNA(n) + a ribonucleoside 5'-triphosphate = RNA(n+1) + diphosphate. DNA-dependent RNA polymerase catalyzes the transcription of DNA into RNA using the four ribonucleoside triphosphates as substrates. The chain is DNA-directed RNA polymerase subunit beta'' from Olimarabidopsis pumila (Dwarf rocket).